Consider the following 397-residue polypeptide: RNA polymerase II elongation factor ELL3 (397 aa).

2 disordered regions span residues 164–219 (VSDP…KRSV) and 237–284 (VPSP…PEDI). Residues 168 to 178 (LASNQGQSLPG) show a composition bias toward polar residues. Positions 250–262 (QEGEDWEQEDEDM) are enriched in acidic residues. Over residues 269 to 281 (SSSVQEDSESPSP) the composition is skewed to low complexity. In terms of domain architecture, OCEL spans 285-395 (PDYLLQYRAI…LILEFEEKNR (111 aa)).

Belongs to the ELL/occludin family. Interacts with AFF4. Component of the super elongation complex (SEC), at least composed of EAF1, EAF2, CDK9, MLLT3/AF9, AFF (AFF1 or AFF4), the P-TEFb complex and ELL (ELL, ELL2 or ELL3). Component of the little elongation complex (LEC), at least composed of ELL (ELL, ELL2 or ELL3), ZC3H8, ICE1 and ICE2. In terms of tissue distribution, testis specific.

It localises to the nucleus. In terms of biological role, enhancer-binding elongation factor that specifically binds enhancers in embryonic stem cells (ES cells), marks them, and is required for their future activation during stem cell specification. Does not only bind to enhancer regions of active genes, but also marks the enhancers that are in a poised or inactive state in ES cells and is required for establishing proper RNA polymerase II occupancy at developmentally regulated genes in a cohesin-dependent manner. Probably required for priming developmentally regulated genes for later recruitment of the super elongation complex (SEC), for transcriptional activation during differentiation. Required for recruitment of P-TEFb within SEC during differentiation. Probably preloaded on germ cell chromatin, suggesting that it may prime gene activation by marking enhancers as early as in the germ cells. Promoting epithelial-mesenchymal transition (EMT). Elongation factor component of the super elongation complex (SEC), a complex required to increase the catalytic rate of RNA polymerase II transcription by suppressing transient pausing by the polymerase at multiple sites along the DNA. Component of the little elongation complex (LEC), a complex required to regulate small nuclear RNA (snRNA) gene transcription by RNA polymerase II and III. This is RNA polymerase II elongation factor ELL3 (ELL3) from Homo sapiens (Human).